The chain runs to 51 residues: Large ribosomal subunit protein eL39 (51 aa).

Belongs to the eukaryotic ribosomal protein eL39 family. As to quaternary structure, interacts with YIH1.

The protein is Large ribosomal subunit protein eL39 (RPL39) of Kluyveromyces lactis (strain ATCC 8585 / CBS 2359 / DSM 70799 / NBRC 1267 / NRRL Y-1140 / WM37) (Yeast).